The following is a 333-amino-acid chain: Holliday junction branch migration complex subunit RuvB (333 aa).

Positions 1 to 182 are large ATPase domain (RuvB-L); that stretch reads MTNRILDMEQ…FGITGHMEYY (182 aa). ATP is bound by residues Leu21, Arg22, Gly63, Lys66, Thr67, Thr68, 129–131, Arg172, Tyr182, and Arg219; that span reads EDF. Thr67 is a Mg(2+) binding site. A small ATPAse domain (RuvB-S) region spans residues 183 to 253; it reads ELADLTEIVE…ITDKALTMLD (71 aa). Positions 256–333 are head domain (RuvB-H); the sequence is REGLDYVDQK…EHLGYPYTEK (78 aa). Arg292, Arg311, Arg313, and Arg316 together coordinate DNA.

The protein belongs to the RuvB family. Homohexamer. Forms an RuvA(8)-RuvB(12)-Holliday junction (HJ) complex. HJ DNA is sandwiched between 2 RuvA tetramers; dsDNA enters through RuvA and exits via RuvB. An RuvB hexamer assembles on each DNA strand where it exits the tetramer. Each RuvB hexamer is contacted by two RuvA subunits (via domain III) on 2 adjacent RuvB subunits; this complex drives branch migration. In the full resolvosome a probable DNA-RuvA(4)-RuvB(12)-RuvC(2) complex forms which resolves the HJ.

It localises to the cytoplasm. The enzyme catalyses ATP + H2O = ADP + phosphate + H(+). In terms of biological role, the RuvA-RuvB-RuvC complex processes Holliday junction (HJ) DNA during genetic recombination and DNA repair, while the RuvA-RuvB complex plays an important role in the rescue of blocked DNA replication forks via replication fork reversal (RFR). RuvA specifically binds to HJ cruciform DNA, conferring on it an open structure. The RuvB hexamer acts as an ATP-dependent pump, pulling dsDNA into and through the RuvAB complex. RuvB forms 2 homohexamers on either side of HJ DNA bound by 1 or 2 RuvA tetramers; 4 subunits per hexamer contact DNA at a time. Coordinated motions by a converter formed by DNA-disengaged RuvB subunits stimulates ATP hydrolysis and nucleotide exchange. Immobilization of the converter enables RuvB to convert the ATP-contained energy into a lever motion, pulling 2 nucleotides of DNA out of the RuvA tetramer per ATP hydrolyzed, thus driving DNA branch migration. The RuvB motors rotate together with the DNA substrate, which together with the progressing nucleotide cycle form the mechanistic basis for DNA recombination by continuous HJ branch migration. Branch migration allows RuvC to scan DNA until it finds its consensus sequence, where it cleaves and resolves cruciform DNA. The protein is Holliday junction branch migration complex subunit RuvB of Streptococcus suis (strain 98HAH33).